Consider the following 600-residue polypeptide: Proton channel OTOP1 (600 aa).

The tract at residues 1–50 is disordered; sequence MPGGPGAPSSPAASSGSSRAAPSGIAACPLSPPPLARGSPQASGPRRGAS. Over 1–56 the chain is Cytoplasmic; the sequence is MPGGPGAPSSPAASSGSSRAAPSGIAACPLSPPPLARGSPQASGPRRGASVPQKLA. Over residues 7-27 the composition is skewed to low complexity; the sequence is APSSPAASSGSSRAAPSGIAA. Residues 57–78 form a helical membrane-spanning segment; that stretch reads ETLSSQYGLNVFVAGLLFLLAW. At 79 to 86 the chain is on the extracellular side; the sequence is AVHATGVG. A helical transmembrane segment spans residues 87-110; it reads KSDLLCVLTALMLLQLLWMLWYVG. Residues 111–128 lie on the Cytoplasmic side of the membrane; that stretch reads RSYMQRRLIRPKDTHAGA. The helical transmembrane segment at 129 to 151 threads the bilayer; it reads RWLRGSITLFAFITVVLGCLKVA. Residues 152-161 are Extracellular-facing; that stretch reads YFIGFSECLS. A helical membrane pass occupies residues 162–186; sequence ATEGVFPVTHAVHTLLQVYFLWGHA. The Cytoplasmic segment spans residues 187 to 194; sequence KDIIMSFK. Residues 195 to 217 traverse the membrane as a helical segment; that stretch reads TLERFGVIHSVFTNLLLWANSVL. Over 218-262 the chain is Extracellular; that stretch reads NESKHQLNEHKERLITLGFGNITIVLDDHTPQCNCTPPALCSALS. The helical transmembrane segment at 263–288 threads the bilayer; that stretch reads HGIYYLYPFNIEYQILASTMLYVLWK. The Cytoplasmic portion of the chain corresponds to 289–309; it reads NIGRRVDSSQHQKMQCRFDGV. A helical membrane pass occupies residues 310–332; that stretch reads LVGSVLGLTVLAATIAVVVVYMI. Residues 333–342 are Extracellular-facing; it reads HIGRSKSKSE. The chain crosses the membrane as a helical span at residues 343–368; that stretch reads SALIMFYLYAITVLLLMGAAGLVGSW. Topologically, residues 369 to 386 are cytoplasmic; the sequence is IYRVDEKSLDESKNPARK. Residues 387–411 traverse the membrane as a helical segment; that stretch reads LDVDLLVATGSGSWLLSWGSILAIA. Residues 412–421 lie on the Extracellular side of the membrane; sequence CAETRPPYTW. The helical transmembrane segment at 422-442 threads the bilayer; sequence YNLPYSVLVIVEKYVQNIFII. The Cytoplasmic portion of the chain corresponds to 443-532; it reads ESVHLEPEGV…QGGMKRRLLR (90 aa). The helical transmembrane segment at 533–551 threads the bilayer; sequence NITAFLFLCNISLWIPPAF. Over 552–569 the chain is Extracellular; it reads GCRPEYDNGLEEIVFGFE. The helical transmembrane segment at 570–593 threads the bilayer; sequence PWIIVVNLAMPFSIFYRMHAAAAL. Over 594–600 the chain is Cytoplasmic; sequence FEVYCKI.

It belongs to the otopetrin family. As to quaternary structure, homodimer. Interacts with STAT1, independently of STAT1 phosphorylation status. As to expression, expressed in thymus, heart, kidney, skin, vestibular system of the inner ear, sour taste cells, heart, uterus, dorsal root ganglion, adrenal gland, lactating mammary gland and stimulated mast cells. In the inner ear, expressed in the supporting cells in extrastriolar regions of the saccule and in the utricle, but not in the cochlea. Expressed in brown adipose tissue. Expressed in epididymal white adipose tissue (eWAT), as well as in inguinal fat, in obese animals, but hardly detectable in eWAT from lean mice. Expressed in acid-sensing taste receptor cells (PKD2L1-positive cells), but not in other types of taste cells (at protein level).

It localises to the cell membrane. The protein resides in the cell projection. Its subcellular location is the microvillus. It catalyses the reaction H(+)(in) = H(+)(out). Activated by both acid and alkali, with proton influx in response to extracellular acid and proton efflux during alkali stimulation. Inhibited by Zn(2+); this inhibition is thought to be pH-sensitive. Currents evoked in response to mild acid (pH 6.0) stimulus may also be mildly potentiated by exposure to Zn(2+). Activated by NH(4)Cl. In terms of biological role, proton-selective ion channel. Biphasically modulated by acid and alkali, mediating proton influx and efflux in response to extracellular acid and base stimulation, respectively. Sour taste receptor, which carries inward currents in response to extracellular acidification. Sensor for ammonium chloride (NH(4)Cl) in taste receptor cells. NH(4)Cl acts by increasing the intracellular pH, thereby generating a driving force for proton entry through OTOP1 channel. Might also participate in alkaline sensation. Plays a role in the regulation of Ca(2+) flux in response to purigenic (ATP, ADP and UDP) stimuli, leading to increase in cytosolic Ca(2+) due to influx of extracellular calcium. May play this role by inhibiting P2Y purinoceptor-mediated Ca(2+) release in a Ca(2+)-dependent manner and promote an influx of Ca(2+) in response to ATP. Through this mechanism and possibly others, plays a role in the formation and function of calcium carbonate-based structures in the vestibular system of the inner ear, called otoconia, that sense gravity and linear acceleration. In obesity, may attenuate adipose tissue inflammation, through the negative regulation of IFNG signaling, hence may play an adaptive role in the maintainance of metabolic homeostasis. Following alkali activation, may also be permeable Na(+), K(+), Cs(+) and Li(+). This chain is Proton channel OTOP1, found in Mus musculus (Mouse).